A 248-amino-acid chain; its full sequence is Transcription factor cicD (248 aa).

Residues Met-1 to Val-22 show a composition bias toward basic and acidic residues. The disordered stretch occupies residues Met-1–Gly-25. The 56-residue stretch at Asp-19 to Gly-74 folds into the HTH myb-type domain. Residues Trp-46–Ser-70 constitute a DNA-binding region (H-T-H motif). Residues Ser-186–Asp-208 form a disordered region.

It is found in the nucleus. Functionally, transcription factor that regulates the expression of the gene cluster that mediates the biosynthesis of cichorine, a phytotoxin active against knapweed, corn, and soybeans. The chain is Transcription factor cicD from Emericella nidulans (strain FGSC A4 / ATCC 38163 / CBS 112.46 / NRRL 194 / M139) (Aspergillus nidulans).